The following is a 76-amino-acid chain: NKELDPVQKLFVDKIREYRTKRQTSGGPVDAGPEYQQDLDRELFKLKQMYGKADMNTFPNFTFEDPKFEAVEKPQS.

3 positions are modified to N6-acetyllysine: Lys-9, Lys-14, and Lys-47. N6-acetyllysine; alternate is present on residues Lys-52 and Lys-67. Lys-52 and Lys-67 each carry N6-succinyllysine; alternate. Lys-73 is modified (N6-acetyllysine). Ser-76 is subject to Phosphoserine.

It belongs to the eukaryotic ATPase subunit F6 family. As to quaternary structure, component of the ATP synthase complex composed at least of ATP5F1A/subunit alpha, ATP5F1B/subunit beta, ATP5MC1/subunit c (homooctomer), MT-ATP6/subunit a, MT-ATP8/subunit 8, ATP5ME/subunit e, ATP5MF/subunit f, ATP5MG/subunit g, ATP5MK/subunit k, ATP5MJ/subunit j, ATP5F1C/subunit gamma, ATP5F1D/subunit delta, ATP5F1E/subunit epsilon, ATP5PF/subunit F6, ATP5PB/subunit b, ATP5PD/subunit d, ATP5PO/subunit OSCP. ATP synthase complex consists of a soluble F(1) head domain (subunits alpha(3) and beta(3)) - the catalytic core - and a membrane F(0) domain - the membrane proton channel (subunits c, a, 8, e, f, g, k and j). These two domains are linked by a central stalk (subunits gamma, delta, and epsilon) rotating inside the F1 region and a stationary peripheral stalk (subunits F6, b, d, and OSCP).

It is found in the mitochondrion. The protein localises to the mitochondrion inner membrane. Subunit F6, of the mitochondrial membrane ATP synthase complex (F(1)F(0) ATP synthase or Complex V) that produces ATP from ADP in the presence of a proton gradient across the membrane which is generated by electron transport complexes of the respiratory chain. ATP synthase complex consist of a soluble F(1) head domain - the catalytic core - and a membrane F(1) domain - the membrane proton channel. These two domains are linked by a central stalk rotating inside the F(1) region and a stationary peripheral stalk. During catalysis, ATP synthesis in the catalytic domain of F(1) is coupled via a rotary mechanism of the central stalk subunits to proton translocation. In vivo, can only synthesize ATP although its ATP hydrolase activity can be activated artificially in vitro. Part of the complex F(0) domain. Part of the complex F(0) domain and the peripheric stalk, which acts as a stator to hold the catalytic alpha(3)beta(3) subcomplex and subunit a/ATP6 static relative to the rotary elements. This is ATP synthase peripheral stalk subunit F6, mitochondrial from Sus scrofa (Pig).